The following is a 369-amino-acid chain: UDP-N-acetylglucosamine--N-acetylmuramyl-(pentapeptide) pyrophosphoryl-undecaprenol N-acetylglucosamine transferase (369 aa).

UDP-N-acetyl-alpha-D-glucosamine contacts are provided by residues 10–12 (TGG), Asn124, Ser195, Ile252, and Gln297.

It belongs to the glycosyltransferase 28 family. MurG subfamily.

It localises to the cell membrane. It catalyses the reaction Mur2Ac(oyl-L-Ala-gamma-D-Glu-L-Lys-D-Ala-D-Ala)-di-trans,octa-cis-undecaprenyl diphosphate + UDP-N-acetyl-alpha-D-glucosamine = beta-D-GlcNAc-(1-&gt;4)-Mur2Ac(oyl-L-Ala-gamma-D-Glu-L-Lys-D-Ala-D-Ala)-di-trans,octa-cis-undecaprenyl diphosphate + UDP + H(+). It functions in the pathway cell wall biogenesis; peptidoglycan biosynthesis. Functionally, cell wall formation. Catalyzes the transfer of a GlcNAc subunit on undecaprenyl-pyrophosphoryl-MurNAc-pentapeptide (lipid intermediate I) to form undecaprenyl-pyrophosphoryl-MurNAc-(pentapeptide)GlcNAc (lipid intermediate II). The sequence is that of UDP-N-acetylglucosamine--N-acetylmuramyl-(pentapeptide) pyrophosphoryl-undecaprenol N-acetylglucosamine transferase from Leuconostoc citreum (strain KM20).